Consider the following 317-residue polypeptide: MNKFKGNKVVLIGNGAVGSIYAFSLVNQSIVDELVIIDLDAEKVRGDVMDLKHATPYSPTTVRVKAGEYSDCHDADLVVICAGAAQKPGETRLDLVSKNLKIFKSIVGEVMASKFDGIFLVATNPVDILAYATWKFSGLPKERVIGSGTILDSARFRLLLSEAFDVAPRSVDAQIIGEHGDTELPVWSHANIAGQPLKTLLEQRPEGKAQIEQIFVQTRDAAYDIIQAKGATYYGVAMGLARITEAIFRNEDAVLTVSALLEGEYDEEDVYIGVPAVINRNGIRNVVEIPLNDEEQSKFAHSAKTLKDIMAEAEELK.

NAD(+) is bound by residues V17, D38, K43, Y69, and 83–84; that span reads GA. Residues Q86 and R92 each coordinate substrate. Residues S105, 122 to 124, and S147 contribute to the NAD(+) site; that span reads ATN. Substrate is bound at residue 124-127; sequence NPVD. Position 152-155 (152-155) interacts with substrate; the sequence is DSAR. H179 functions as the Proton acceptor in the catalytic mechanism. A Phosphotyrosine modification is found at Y223. T232 serves as a coordination point for substrate.

It belongs to the LDH/MDH superfamily. LDH family. As to quaternary structure, homotetramer.

Its subcellular location is the cytoplasm. It carries out the reaction (S)-lactate + NAD(+) = pyruvate + NADH + H(+). It participates in fermentation; pyruvate fermentation to lactate; (S)-lactate from pyruvate: step 1/1. Functionally, catalyzes the conversion of lactate to pyruvate (Potential). Appears to be the primary factor that allows S.aureus growth during nitrosative stress in both aerobically and anaerobically cultured cells. This is L-lactate dehydrogenase 1 from Staphylococcus aureus (strain MRSA252).